The following is a 217-amino-acid chain: 3-demethoxyubiquinol 3-hydroxylase (217 aa).

Fe cation-binding residues include glutamate 66, glutamate 96, histidine 99, glutamate 148, glutamate 180, and histidine 183.

This sequence belongs to the COQ7 family. Requires Fe cation as cofactor.

The protein resides in the cell membrane. The enzyme catalyses a 5-methoxy-2-methyl-3-(all-trans-polyprenyl)benzene-1,4-diol + AH2 + O2 = a 3-demethylubiquinol + A + H2O. It participates in cofactor biosynthesis; ubiquinone biosynthesis. In terms of biological role, catalyzes the hydroxylation of 2-nonaprenyl-3-methyl-6-methoxy-1,4-benzoquinol during ubiquinone biosynthesis. This is 3-demethoxyubiquinol 3-hydroxylase from Xanthomonas axonopodis pv. citri (strain 306).